A 340-amino-acid polypeptide reads, in one-letter code: Protein RecA (340 aa).

Residue 67–74 (GNESSGKT) participates in ATP binding.

It belongs to the RecA family.

It localises to the cytoplasm. Its function is as follows. Can catalyze the hydrolysis of ATP in the presence of single-stranded DNA, the ATP-dependent uptake of single-stranded DNA by duplex DNA, and the ATP-dependent hybridization of homologous single-stranded DNAs. It interacts with LexA causing its activation and leading to its autocatalytic cleavage. This is Protein RecA from Mycoplasma genitalium (strain ATCC 33530 / DSM 19775 / NCTC 10195 / G37) (Mycoplasmoides genitalium).